Here is an 831-residue protein sequence, read N- to C-terminus: Periplasmic nitrate reductase (831 aa).

The segment at residues 1–29 is a signal peptide (tat-type signal); sequence MTVTRRDFVRHQALATAAAAAGVAVPAAA. The 57-residue stretch at 41–97 folds into the 4Fe-4S Mo/W bis-MGD-type domain; sequence LVWSKAPCRFCGTGCSVNVATKEGRVVATHGDIKSPVNRGLNCVKGYFLSKVMYGED. Residues Cys48, Cys51, Cys55, and Cys83 each contribute to the [4Fe-4S] cluster site. Mo-bis(molybdopterin guanine dinucleotide)-binding positions include Lys85, Gln152, Asn177, Cys181, 214 to 221, 245 to 249, 264 to 266, Met375, Gln379, Asn485, 511 to 512, Lys534, Asp561, and 721 to 730; these read WGSNMAEM, STYEH, QSD, SD, and TGRVIEHWHS. Residue Trp797 participates in substrate binding. Mo-bis(molybdopterin guanine dinucleotide)-binding residues include Asn805 and Lys822.

This sequence belongs to the prokaryotic molybdopterin-containing oxidoreductase family. NasA/NapA/NarB subfamily. As to quaternary structure, component of the periplasmic nitrate reductase NapAB complex composed of NapA and NapB. [4Fe-4S] cluster serves as cofactor. It depends on Mo-bis(molybdopterin guanine dinucleotide) as a cofactor. In terms of processing, predicted to be exported by the Tat system. The position of the signal peptide cleavage has not been experimentally proven.

Its subcellular location is the periplasm. It catalyses the reaction 2 Fe(II)-[cytochrome] + nitrate + 2 H(+) = 2 Fe(III)-[cytochrome] + nitrite + H2O. In terms of biological role, catalytic subunit of the periplasmic nitrate reductase complex NapAB. Receives electrons from NapB and catalyzes the reduction of nitrate to nitrite. The polypeptide is Periplasmic nitrate reductase (Saccharophagus degradans (strain 2-40 / ATCC 43961 / DSM 17024)).